A 200-amino-acid chain; its full sequence is Holliday junction resolvase RecU (200 aa).

A disordered region spans residues 1–25 (MTIRYPNGKRYNQASQPHKTPIKKH). Thr85, Asp87, Glu100, and Gln119 together coordinate Mg(2+).

Belongs to the RecU family. Requires Mg(2+) as cofactor.

Its subcellular location is the cytoplasm. The enzyme catalyses Endonucleolytic cleavage at a junction such as a reciprocal single-stranded crossover between two homologous DNA duplexes (Holliday junction).. Functionally, endonuclease that resolves Holliday junction intermediates in genetic recombination. Cleaves mobile four-strand junctions by introducing symmetrical nicks in paired strands. Promotes annealing of linear ssDNA with homologous dsDNA. Required for DNA repair, homologous recombination and chromosome segregation. The polypeptide is Holliday junction resolvase RecU (Bacillus thuringiensis (strain Al Hakam)).